We begin with the raw amino-acid sequence, 209 residues long: MIGLVGKKVGMTRIFTEDGVSIPVTVIEIENNRVTQVKDLEKDGYRAIQVTTGSKKANRVLKPEAGHFAKAGVEAGRLLREFRLNEGEEYTVGQSISVEIFADVKKVDVTGTSKGKGFAGTVKRWNFRTQDATHGNSLSHRVPGSIGQNQTPGRVFKGKKMAGQLGNEQVTVQSLEVVRVDAERNLLLVKGAVPGATGSDLIVKPAVKA.

Q150 carries the N5-methylglutamine modification.

It belongs to the universal ribosomal protein uL3 family. In terms of assembly, part of the 50S ribosomal subunit. Forms a cluster with proteins L14 and L19. Methylated by PrmB.

Functionally, one of the primary rRNA binding proteins, it binds directly near the 3'-end of the 23S rRNA, where it nucleates assembly of the 50S subunit. In Proteus mirabilis (strain HI4320), this protein is Large ribosomal subunit protein uL3.